A 691-amino-acid polypeptide reads, in one-letter code: Glycine--tRNA ligase beta subunit (691 aa).

Belongs to the class-II aminoacyl-tRNA synthetase family. Tetramer of two alpha and two beta subunits.

It localises to the cytoplasm. The catalysed reaction is tRNA(Gly) + glycine + ATP = glycyl-tRNA(Gly) + AMP + diphosphate. The sequence is that of Glycine--tRNA ligase beta subunit from Limosilactobacillus reuteri (strain DSM 20016) (Lactobacillus reuteri).